The following is a 127-amino-acid chain: Photosystem II reaction center Psb28 protein (127 aa).

The disordered stretch occupies residues 108–127; sequence LGYSQSQDSDQTEGADNQQA. Polar residues predominate over residues 109-127; the sequence is GYSQSQDSDQTEGADNQQA.

This sequence belongs to the Psb28 family. In terms of assembly, part of the photosystem II complex.

Its subcellular location is the cellular thylakoid membrane. This Synechococcus sp. (strain CC9605) protein is Photosystem II reaction center Psb28 protein.